Consider the following 334-residue polypeptide: Ornithine carbamoyltransferase, catabolic (334 aa).

Residues 57–60, Gln84, Arg108, and 135–138 contribute to the carbamoyl phosphate site; these read STRT and HPTQ. L-ornithine-binding positions include Asn168, Asp232, and 236–237; that span reads SM. Carbamoyl phosphate-binding positions include 274 to 275 and Arg321; that span reads CL.

The protein belongs to the aspartate/ornithine carbamoyltransferase superfamily. OTCase family.

It localises to the cytoplasm. It carries out the reaction carbamoyl phosphate + L-ornithine = L-citrulline + phosphate + H(+). It participates in amino-acid degradation; L-arginine degradation via ADI pathway; carbamoyl phosphate from L-arginine: step 2/2. In terms of biological role, reversibly catalyzes the transfer of the carbamoyl group from carbamoyl phosphate (CP) to the N(epsilon) atom of ornithine (ORN) to produce L-citrulline. The sequence is that of Ornithine carbamoyltransferase, catabolic (arcB) from Haemophilus influenzae (strain ATCC 51907 / DSM 11121 / KW20 / Rd).